The chain runs to 121 residues: Ribonuclease P protein component (121 aa).

The protein belongs to the RnpA family. In terms of assembly, consists of a catalytic RNA component (M1 or rnpB) and a protein subunit.

The catalysed reaction is Endonucleolytic cleavage of RNA, removing 5'-extranucleotides from tRNA precursor.. In terms of biological role, RNaseP catalyzes the removal of the 5'-leader sequence from pre-tRNA to produce the mature 5'-terminus. It can also cleave other RNA substrates such as 4.5S RNA. The protein component plays an auxiliary but essential role in vivo by binding to the 5'-leader sequence and broadening the substrate specificity of the ribozyme. This chain is Ribonuclease P protein component, found in Lactobacillus delbrueckii subsp. bulgaricus (strain ATCC 11842 / DSM 20081 / BCRC 10696 / JCM 1002 / NBRC 13953 / NCIMB 11778 / NCTC 12712 / WDCM 00102 / Lb 14).